Here is a 100-residue protein sequence, read N- to C-terminus: Large ribosomal subunit protein uL23 (100 aa).

Belongs to the universal ribosomal protein uL23 family. Part of the 50S ribosomal subunit. Contacts protein L29, and trigger factor when it is bound to the ribosome.

One of the early assembly proteins it binds 23S rRNA. One of the proteins that surrounds the polypeptide exit tunnel on the outside of the ribosome. Forms the main docking site for trigger factor binding to the ribosome. The protein is Large ribosomal subunit protein uL23 of Xylella fastidiosa (strain M23).